The primary structure comprises 163 residues: uncharacterized protein (163 aa).

A disordered region spans residues 30 to 163; sequence GNENTSVSSD…IYKKLGKKKR (134 aa). A compositionally biased stretch (basic and acidic residues) spans 88–118; sequence ERQLQKKKEAEKIEGGKNHDNLKRKLNKVGD. Residues 119–133 show a composition bias toward acidic residues; the sequence is ELNEQQSDTDDDDDD. Position 125 is a phosphoserine (Ser-125). Thr-127 bears the Phosphothreonine mark.

The protein localises to the nucleus. The protein resides in the nucleolus. This is an uncharacterized protein from Schizosaccharomyces pombe (strain 972 / ATCC 24843) (Fission yeast).